The primary structure comprises 303 residues: Putative S-adenosyl-L-methionine-dependent methyltransferase MAB_0213c (303 aa).

Residues Asp126 and 155 to 156 contribute to the S-adenosyl-L-methionine site; that span reads DL.

The protein belongs to the UPF0677 family.

In terms of biological role, exhibits S-adenosyl-L-methionine-dependent methyltransferase activity. This chain is Putative S-adenosyl-L-methionine-dependent methyltransferase MAB_0213c, found in Mycobacteroides abscessus (strain ATCC 19977 / DSM 44196 / CCUG 20993 / CIP 104536 / JCM 13569 / NCTC 13031 / TMC 1543 / L948) (Mycobacterium abscessus).